The chain runs to 136 residues: Protein NrdI (136 aa).

This sequence belongs to the NrdI family.

Probably involved in ribonucleotide reductase function. In Enterobacter sp. (strain 638), this protein is Protein NrdI.